Reading from the N-terminus, the 397-residue chain is Anhydro-N-acetylmuramic acid kinase (397 aa).

9–16 lines the ATP pocket; that stretch reads GTSYDAID.

Belongs to the anhydro-N-acetylmuramic acid kinase family.

The enzyme catalyses 1,6-anhydro-N-acetyl-beta-muramate + ATP + H2O = N-acetyl-D-muramate 6-phosphate + ADP + H(+). The protein operates within amino-sugar metabolism; 1,6-anhydro-N-acetylmuramate degradation. Its pathway is cell wall biogenesis; peptidoglycan recycling. Functionally, catalyzes the specific phosphorylation of 1,6-anhydro-N-acetylmuramic acid (anhMurNAc) with the simultaneous cleavage of the 1,6-anhydro ring, generating MurNAc-6-P. Is required for the utilization of anhMurNAc either imported from the medium or derived from its own cell wall murein, and thus plays a role in cell wall recycling. The sequence is that of Anhydro-N-acetylmuramic acid kinase from Rhodococcus erythropolis (strain PR4 / NBRC 100887).